The sequence spans 348 residues: Dihydroorotase (348 aa).

Histidine 17 and histidine 19 together coordinate Zn(2+). Residues 19-21 (HLR) and asparagine 45 each bind substrate. Zn(2+) contacts are provided by lysine 103, histidine 140, and histidine 178. The residue at position 103 (lysine 103) is an N6-carboxylysine. Histidine 140 contributes to the substrate binding site. Leucine 223 contributes to the substrate binding site. Aspartate 251 contributes to the Zn(2+) binding site. Residue aspartate 251 is part of the active site. Substrate-binding residues include histidine 255 and alanine 267.

Belongs to the metallo-dependent hydrolases superfamily. DHOase family. Class II DHOase subfamily. Homodimer. It depends on Zn(2+) as a cofactor.

It carries out the reaction (S)-dihydroorotate + H2O = N-carbamoyl-L-aspartate + H(+). It participates in pyrimidine metabolism; UMP biosynthesis via de novo pathway; (S)-dihydroorotate from bicarbonate: step 3/3. In terms of biological role, catalyzes the reversible cyclization of carbamoyl aspartate to dihydroorotate. The protein is Dihydroorotase of Salmonella typhimurium (strain LT2 / SGSC1412 / ATCC 700720).